We begin with the raw amino-acid sequence, 503 residues long: Maturase K (503 aa).

This sequence belongs to the intron maturase 2 family. MatK subfamily.

The protein localises to the plastid. It localises to the chloroplast. Its function is as follows. Usually encoded in the trnK tRNA gene intron. Probably assists in splicing its own and other chloroplast group II introns. The sequence is that of Maturase K from Panax quinquefolius (American ginseng).